We begin with the raw amino-acid sequence, 474 residues long: Aromatic amino acid aminotransferase C56E4.03 (474 aa).

This sequence belongs to the class-I pyridoxal-phosphate-dependent aminotransferase family. The cofactor is pyridoxal 5'-phosphate.

It is found in the cytoplasm. It catalyses the reaction an aromatic L-alpha-amino acid + 2-oxoglutarate = an aromatic oxo-acid + L-glutamate. In terms of biological role, has aromatic amino acid transaminase activity. The chain is Aromatic amino acid aminotransferase C56E4.03 from Schizosaccharomyces pombe (strain 972 / ATCC 24843) (Fission yeast).